A 428-amino-acid polypeptide reads, in one-letter code: uncharacterized protein (428 aa).

The next 10 membrane-spanning stretches (helical) occupy residues 26 to 46 (VALTCAAIMVGAGIVGSDDVF), 51 to 71 (AGIDWDVIFLLLGMMIIVSVL), 90 to 110 (AAPLRIMILLVLVTALGSALL), 135 to 155 (TPFLVAEVFASNVGGAATLVG), 177 to 197 (MAPAVLVVMIALIGLLPWLLG), 223 to 243 (LLIKCGVVLVLVFAAFIAHPV), 278 to 298 (TLLFFAGLFVMVGALVKTGVV), 314 to 334 (LLTVGLILGISAPVSGIIDNI), 359 to 379 (TFWWALALSADFGGNLTAVAA), and 407 to 427 (VVTAVSLVLSAVYLWLRYFVF).

This sequence belongs to the CitM (TC 2.A.11) transporter family.

Its subcellular location is the cell membrane. This is an uncharacterized protein from Mycobacterium tuberculosis (strain CDC 1551 / Oshkosh).